Reading from the N-terminus, the 68-residue chain is Large ribosomal subunit protein bL35 (68 aa).

2 stretches are compositionally biased toward basic residues: residues 1–11 (MPKLKTRSSAK) and 19–29 (SGKVKHGKAFA). Residues 1 to 54 (MPKLKTRSSAKKRFDVKKSGKVKHGKAFAKHLFTFSKTPKSKRSNRGTGHLRDM) form a disordered region.

Belongs to the bacterial ribosomal protein bL35 family.

This is Large ribosomal subunit protein bL35 from Myxococcus xanthus (strain DK1622).